A 275-amino-acid chain; its full sequence is Large ribosomal subunit protein uL2 (275 aa).

Residues V221–K275 are disordered.

This sequence belongs to the universal ribosomal protein uL2 family. As to quaternary structure, part of the 50S ribosomal subunit. Forms a bridge to the 30S subunit in the 70S ribosome.

Functionally, one of the primary rRNA binding proteins. Required for association of the 30S and 50S subunits to form the 70S ribosome, for tRNA binding and peptide bond formation. It has been suggested to have peptidyltransferase activity; this is somewhat controversial. Makes several contacts with the 16S rRNA in the 70S ribosome. The chain is Large ribosomal subunit protein uL2 from Desulfosudis oleivorans (strain DSM 6200 / JCM 39069 / Hxd3) (Desulfococcus oleovorans).